The sequence spans 318 residues: Dual specificity protein phosphatase 2 (318 aa).

A Rhodanese domain is found at 27–148; sequence EAERTLLLDC…FQTYCPDLCS (122 aa). Residues 176-317 form the Tyrosine-protein phosphatase domain; that stretch reads GPVEILPYLY…LLQLETQVLC (142 aa). Catalysis depends on Cys261, which acts as the Phosphocysteine intermediate.

It belongs to the protein-tyrosine phosphatase family. Non-receptor class dual specificity subfamily. Interacts with MAPK14; this interaction does not lead to catalytic activation of DUSP2 and dephosphrylation of MAPK14. In hematopoietic tissues such as spleen and thymus.

It is found in the nucleus. It catalyses the reaction O-phospho-L-tyrosyl-[protein] + H2O = L-tyrosyl-[protein] + phosphate. It carries out the reaction O-phospho-L-threonyl-[protein] + H2O = L-threonyl-[protein] + phosphate. Its function is as follows. Dephosphorylates both phosphorylated Thr and Tyr residues in MAPK1, and dephosphorylation of phosphotyrosine is slightly faster than that of phosphothreonine. Can dephosphorylate MAPK1. This is Dual specificity protein phosphatase 2 from Mus musculus (Mouse).